A 324-amino-acid polypeptide reads, in one-letter code: Lactonase drp35 (324 aa).

Residues Glu47, Ser109, Gly111, Asp129, Thr132, Tyr134, Asp137, Asn184, Asp235, and Ser236 each contribute to the Ca(2+) site. The Proton donor role is filled by Asp235.

This sequence belongs to the SMP-30/CGR1 family. Ca(2+) is required as a cofactor.

It is found in the cytoplasm. Functionally, exhibits lactonase activity. Acts in cells with perturbed membrane integrity and is possibly related to the membrane homeostasis. This chain is Lactonase drp35 (drp35), found in Staphylococcus saprophyticus subsp. saprophyticus (strain ATCC 15305 / DSM 20229 / NCIMB 8711 / NCTC 7292 / S-41).